The sequence spans 436 residues: Protein arginine methyltransferase NDUFAF7, mitochondrial (436 aa).

The transit peptide at 1–41 directs the protein to the mitochondrion; that stretch reads MNALVRRCVARTGIPSIWRRKCFSSGNEPAESNHVTPMLRH. The disordered stretch occupies residues 413–436; the sequence is QGGKACQSEAPSTSVPGFDELVWH.

The protein belongs to the NDUFAF7 family. In terms of assembly, interacts with NDUFS2.

It is found in the mitochondrion. The enzyme catalyses L-arginyl-[protein] + 2 S-adenosyl-L-methionine = N(omega),N(omega)'-dimethyl-L-arginyl-[protein] + 2 S-adenosyl-L-homocysteine + 2 H(+). Functionally, arginine methyltransferase involved in the assembly or stability of mitochondrial NADH:ubiquinone oxidoreductase complex (complex I). Acts by mediating symmetric dimethylation of 'Arg-118' of NDUFS2 after it assembles into the complex I, stabilizing the early intermediate complex. The protein is Protein arginine methyltransferase NDUFAF7, mitochondrial of Rattus norvegicus (Rat).